A 758-amino-acid chain; its full sequence is Microtubule-associated protein tau (758 aa).

Basic and acidic residues predominate over residues 1 to 26; it reads MAEPHQEFDVTEDHAGTYGLGDRKDQ. Positions 1 to 573 are disordered; it reads MAEPHQEFDV…PVPMPDLKNV (573 aa). Ala-2 is modified (N-acetylalanine). Phosphotyrosine occurs at positions 18 and 29. Lys-44 participates in a covalent cross-link: Glycyl lysine isopeptide (Lys-Gly) (interchain with G-Cter in ubiquitin). Phosphoserine occurs at positions 46 and 61. The span at 61–71 shows a compositional bias: polar residues; that stretch reads SETSDAKSTPT. 3 positions are modified to phosphothreonine: Thr-69, Thr-71, and Thr-111. 2 stretches are compositionally biased toward basic and acidic residues: residues 179-189 and 207-216; these read EGGRHAPELLK and GGKERPGSKE. Position 214 is a phosphoserine (Ser-214). Residues 217-228 are compositionally biased toward acidic residues; that stretch reads EVDEDRDVDESS. The span at 314–323 shows a compositional bias: basic and acidic residues; sequence EQAHSEEHLR. Residues 325 to 340 are compositionally biased toward low complexity; the sequence is AAFPGAPGEGPEAQGP. 2 stretches are compositionally biased toward basic and acidic residues: residues 344–356 and 381–393; these read EDAKEADLPEPSE and KSKDGTGSDDKKA. Positions 440 to 452 are enriched in polar residues; it reads KYVSSVTPRTGSS. Residues 455-466 show a composition bias toward basic and acidic residues; it reads KEMKLKGADGKT. Thr-470 is modified (phosphothreonine). Position 472 is an omega-N-methylarginine (Arg-472). Lys-480 carries the N6,N6-dimethyllysine; alternate modification. Lys-480 carries the N6-acetyllysine; alternate modification. Thr-486, Thr-492, and Thr-498 each carry phosphothreonine. The segment covering 491–503 has biased composition (pro residues); sequence KTPPAPKTPPSSG. A phosphoserine mark is found at Ser-502, Ser-508, and Ser-512. The span at 504 to 531 shows a compositional bias: low complexity; sequence EPPKSGDRSGYSSPGSPGTPGSRSRTPS. Phosphotyrosine is present on Tyr-514. Ser-515, Ser-516, and Ser-519 each carry phosphoserine. 2 positions are modified to phosphothreonine: Thr-522 and Thr-529. Ser-531 carries the post-translational modification Phosphoserine. Thr-534 bears the Phosphothreonine mark. Lys-542 carries the post-translational modification N6-acetyllysine. Position 548 is a phosphothreonine (Thr-548). Ser-552 and Ser-554 each carry phosphoserine. 4 Tau/MAP repeats span residues 561-591, 592-622, 623-653, and 654-685; these read QTAPVPMPDLKNVKSKIGSTENLKHQPGGGK, VQIINKKLDLSNVQSKCGSKDNIKHVPGGGS, VQIVYKPVDLSKVTSKCGSLGNIHHKPGGGQ, and VEVKSEKLDFKDRVQSKIGSLDNITHVPGGGH. Lys-571 participates in a covalent cross-link: Glycyl lysine isopeptide (Lys-Gly) (interchain with G-Cter in ubiquitin). Position 576 is an N6-acetyllysine; alternate (Lys-576). N6-methyllysine; alternate is present on Lys-576. Lys-576 is covalently cross-linked (Glycyl lysine isopeptide (Lys-Gly) (interchain with G-Cter in ubiquitin); alternate). Residue Ser-579 is modified to Phosphoserine. A Glycyl lysine isopeptide (Lys-Gly) (interchain with G-Cter in ubiquitin) cross-link involves residue Lys-584. At Lys-598 the chain carries N6-acetyllysine; alternate. A Glycyl lysine isopeptide (Lys-Gly) (interchain with G-Cter in ubiquitin); alternate cross-link involves residue Lys-598. Phosphoserine occurs at positions 602 and 606. Residue Lys-607 is modified to N6-acetyllysine. At Ser-610 the chain carries Phosphoserine. Lys-615 is modified (N6-acetyllysine; alternate). Lys-615 participates in a covalent cross-link: Glycyl lysine isopeptide (Lys-Gly) (interchain with G-Cter in ubiquitin); alternate. Residue Ser-622 is modified to Phosphoserine. Residue Lys-628 is modified to N6,N6-dimethyllysine; alternate. Lys-628, Lys-634, and Lys-638 each carry N6-acetyllysine; alternate. Residues Lys-628, Lys-634, and Lys-638 each participate in a glycyl lysine isopeptide (Lys-Gly) (interchain with G-Cter in ubiquitin); alternate cross-link. The residue at position 641 (Ser-641) is a Phosphoserine. Lys-648, Lys-660, and Lys-664 each carry N6-acetyllysine; alternate. Glycyl lysine isopeptide (Lys-Gly) (interchain with G-Cter in ubiquitin); alternate cross-links involve residues Lys-648, Lys-660, and Lys-664. At Arg-666 the chain carries Omega-N-methylarginine. The residue at position 669 (Ser-669) is a Phosphoserine. A Glycyl lysine isopeptide (Lys-Gly) (interchain with G-Cter in ubiquitin) cross-link involves residue Lys-670. Ser-673 carries the post-translational modification Phosphoserine. The residue at position 686 (Lys-686) is an N6-acetyllysine; alternate. Lys-686 participates in a covalent cross-link: Glycyl lysine isopeptide (Lys-Gly) (interchain with G-Cter in ubiquitin); alternate. Residue Lys-692 forms a Glycyl lysine isopeptide (Lys-Gly) (interchain with G-Cter in ubiquitin) linkage. The residue at position 702 (Lys-702) is an N6-acetyllysine; alternate. Lys-702 participates in a covalent cross-link: Glycyl lysine isopeptide (Lys-Gly) (interchain with G-Cter in ubiquitin); alternate. Phosphotyrosine is present on Tyr-711. A phosphoserine mark is found at Ser-713 and Ser-717. Residues 715–734 form a disordered region; that stretch reads VVSGDTSPRHLSNVSSTGSI. The span at 718-733 shows a compositional bias: polar residues; sequence GDTSPRHLSNVSSTGS. Thr-720 carries the post-translational modification Phosphothreonine. A phosphoserine mark is found at Ser-721, Ser-726, Ser-733, and Ser-739. Thr-744 carries the phosphothreonine modification.

Interacts with MARK1, MARK2, MARK3 and MARK4. Interacts with SQSTM1 when polyubiquitinated. Interacts with PSMC2 through SQSTM1. Interacts with FKBP4. Binds to CSNK1D. Interacts with SGK1. Interacts with EPM2A; the interaction dephosphorylates MAPT at Ser-396. Interacts with PIN1. Interacts with LRRK2. Interacts with LRP1, leading to endocytosis; this interaction is reduced in the presence of LRPAP1/RAP. Post-translationally, polyubiquitinated. Requires functional TRAF6 and may provoke SQSTM1-dependent degradation by the proteasome. Phosphorylation at various serine and threonine residues in S-P or T-P motifs by proline-directed protein kinases (PDPK1, CDK1, CDK5, GSK3, MAPK) (a few sites per protein in interphase, more in mitosis), and at serine residues in K-X-G-S motifs by MAP/microtubule affinity-regulating kinase (MARK1, MARK2, MARK3 or MARK4), causing detachment from microtubules, and their disassembly. Phosphorylation at Ser-579 by BRSK1 and BRSK2 in neurons affects ability to bind microtubules and plays a role in neuron polarization. Phosphorylated by PHK. Dephosphorylation at several serine and threonine residues by the serine/threonine phosphatase PPP5C. Phosphorylation at Ser-214 by SGK1 mediates microtubule depolymerization and neurite formation in hippocampal neurons.

The protein resides in the cytoplasm. The protein localises to the cytosol. It is found in the cell membrane. Its subcellular location is the cytoskeleton. It localises to the cell projection. The protein resides in the axon. The protein localises to the dendrite. Promotes microtubule assembly and stability, and might be involved in the establishment and maintenance of neuronal polarity. The C-terminus binds axonal microtubules while the N-terminus binds neural plasma membrane components, suggesting that tau functions as a linker protein between both. Axonal polarity is predetermined by tau localization (in the neuronal cell) in the domain of the cell body defined by the centrosome. The short isoforms allow plasticity of the cytoskeleton whereas the longer isoforms may preferentially play a role in its stabilization. In Pongo pygmaeus (Bornean orangutan), this protein is Microtubule-associated protein tau (MAPT).